Here is a 690-residue protein sequence, read N- to C-terminus: Serotransferrin-1 (690 aa).

The N-terminal stretch at 1–18 is a signal peptide; sequence MKLLLLSALLGCLATAYA. 2 Transferrin-like domains span residues 25–329 and 340–669; these read VKWC…SLKK and IKWC…SLRK. Cysteine 28 and cysteine 50 are joined by a disulfide. Fe(3+)-binding residues include aspartate 74 and tyrosine 104. Intrachain disulfides connect cysteine 127/cysteine 207, cysteine 172/cysteine 186, and cysteine 235/cysteine 249. Hydrogencarbonate-binding residues include threonine 129, serine 134, glycine 136, and tryptophan 137. The N-linked (GlcNAc...) asparagine glycan is linked to asparagine 169. Tyrosine 201 is a binding site for Fe(3+). Histidine 257 is a binding site for Fe(3+). Disulfide bonds link cysteine 343-cysteine 379 and cysteine 353-cysteine 370. The Fe(3+) site is built by aspartate 394 and tyrosine 428. 7 disulfides stabilise this stretch: cysteine 404/cysteine 681, cysteine 419/cysteine 642, cysteine 451/cysteine 529, cysteine 475/cysteine 670, cysteine 485/cysteine 499, cysteine 496/cysteine 512, and cysteine 569/cysteine 583. Hydrogencarbonate is bound by residues threonine 453, arginine 457, alanine 459, and glycine 460. Tyrosine 523 provides a ligand contact to Fe(3+). Histidine 591 is a Fe(3+) binding site.

The protein belongs to the transferrin family. Monomer. As to expression, abundant in liver and serum with smaller amounts found in the stomach and kidney.

It localises to the secreted. Functionally, transferrins are iron binding transport proteins which can bind two Fe(3+) ions in association with the binding of an anion, usually bicarbonate. It is responsible for the transport of iron from sites of absorption and heme degradation to those of storage and utilization. Serum transferrin may also have a further role in stimulating cell proliferation. This Salmo salar (Atlantic salmon) protein is Serotransferrin-1 (tf1).